The primary structure comprises 396 residues: S-adenosylmethionine synthase (396 aa).

His-16 provides a ligand contact to ATP. Asp-18 provides a ligand contact to Mg(2+). Glu-44 contacts K(+). L-methionine-binding residues include Glu-57 and Gln-100. The flexible loop stretch occupies residues Gln-100–Arg-110. ATP contacts are provided by residues Asp-165–Lys-167, Asp-240, Arg-246–Lys-247, Ala-263, and Lys-267. Asp-240 lines the L-methionine pocket. Residue Lys-271 coordinates L-methionine.

The protein belongs to the AdoMet synthase family. In terms of assembly, homotetramer; dimer of dimers. It depends on Mg(2+) as a cofactor. K(+) is required as a cofactor.

It localises to the cytoplasm. The enzyme catalyses L-methionine + ATP + H2O = S-adenosyl-L-methionine + phosphate + diphosphate. It functions in the pathway amino-acid biosynthesis; S-adenosyl-L-methionine biosynthesis; S-adenosyl-L-methionine from L-methionine: step 1/1. In terms of biological role, catalyzes the formation of S-adenosylmethionine (AdoMet) from methionine and ATP. The overall synthetic reaction is composed of two sequential steps, AdoMet formation and the subsequent tripolyphosphate hydrolysis which occurs prior to release of AdoMet from the enzyme. This is S-adenosylmethionine synthase from Pseudomonas putida (strain ATCC 700007 / DSM 6899 / JCM 31910 / BCRC 17059 / LMG 24140 / F1).